A 204-amino-acid polypeptide reads, in one-letter code: Probable UbiX-like flavin prenyltransferase (204 aa).

Residues 21-23 (GAT), S47, 98-101 (SMKS), and R133 contribute to the FMN site.

It belongs to the UbiX/PAD1 family. YclB subfamily. Homododecamer.

The enzyme catalyses dimethylallyl phosphate + FMNH2 = prenylated FMNH2 + phosphate. Functionally, involved in the non-oxidative decarboxylation and detoxification of phenolic derivatives under both aerobic and anaerobic conditions. Flavin prenyltransferase that catalyzes the synthesis of the prenylated FMN cofactor (prenyl-FMN) for phenolic acid decarboxylase. This is Probable UbiX-like flavin prenyltransferase from Bacillus subtilis (strain 168).